The chain runs to 733 residues: 1,4-alpha-glucan branching enzyme GlgB (733 aa).

The Nucleophile role is filled by D412. E467 acts as the Proton donor in catalysis.

This sequence belongs to the glycosyl hydrolase 13 family. GlgB subfamily. In terms of assembly, monomer.

It carries out the reaction Transfers a segment of a (1-&gt;4)-alpha-D-glucan chain to a primary hydroxy group in a similar glucan chain.. The protein operates within glycan biosynthesis; glycogen biosynthesis. Catalyzes the formation of the alpha-1,6-glucosidic linkages in glycogen by scission of a 1,4-alpha-linked oligosaccharide from growing alpha-1,4-glucan chains and the subsequent attachment of the oligosaccharide to the alpha-1,6 position. This chain is 1,4-alpha-glucan branching enzyme GlgB, found in Burkholderia vietnamiensis (strain G4 / LMG 22486) (Burkholderia cepacia (strain R1808)).